Here is a 327-residue protein sequence, read N- to C-terminus: tRNA N6-adenosine threonylcarbamoyltransferase (327 aa).

Residues histidine 107 and histidine 111 each contribute to the Fe cation site. Substrate contacts are provided by residues 129-133 (LVSGG), aspartate 162, glycine 175, and asparagine 263. Aspartate 291 serves as a coordination point for Fe cation.

The protein belongs to the KAE1 / TsaD family. It depends on Fe(2+) as a cofactor.

It localises to the cytoplasm. It carries out the reaction L-threonylcarbamoyladenylate + adenosine(37) in tRNA = N(6)-L-threonylcarbamoyladenosine(37) in tRNA + AMP + H(+). In terms of biological role, required for the formation of a threonylcarbamoyl group on adenosine at position 37 (t(6)A37) in tRNAs that read codons beginning with adenine. Is involved in the transfer of the threonylcarbamoyl moiety of threonylcarbamoyl-AMP (TC-AMP) to the N6 group of A37, together with TsaE and TsaB. TsaD likely plays a direct catalytic role in this reaction. This is tRNA N6-adenosine threonylcarbamoyltransferase from Nautilia profundicola (strain ATCC BAA-1463 / DSM 18972 / AmH).